Here is a 617-residue protein sequence, read N- to C-terminus: Vacuolar protein sorting-associated protein 33B (617 aa).

Ala2 carries the N-acetylalanine modification.

This sequence belongs to the STXBP/unc-18/SEC1 family. Interacts with RAB11A and VIPAS39. Associates with adapter protein complex 3 (AP-3), clathrin:AP-3 and clathrin:HGS complexes. Phosphorylated on tyrosine residues.

The protein resides in the late endosome membrane. The protein localises to the lysosome membrane. It is found in the early endosome. It localises to the cytoplasmic vesicle. Its subcellular location is the clathrin-coated vesicle. The protein resides in the recycling endosome. Functionally, may play a role in vesicle-mediated protein trafficking to lysosomal compartments and in membrane docking/fusion reactions of late endosomes/lysosomes. Required for proper trafficking and targeting of the collagen-modifying enzyme lysyl hydroxylase 3 (LH3) to intracellular collagen. Mediates phagolysosomal fusion in macrophages. Proposed to be involved in endosomal maturation implicating in part VIPAS39. In epithelial cells, the VPS33B:VIPAS39 complex may play a role in the apical RAB11A-dependentrecycling pathway and in the maintenance of the apical-basolateral polarity. Seems to be involved in the sorting of specific cargos from the trans-Golgi network to alpha-granule-destined multivesicular bodies (MVBs) promoting MVBs maturation in megakaryocytes. The protein is Vacuolar protein sorting-associated protein 33B (Vps33b) of Mus musculus (Mouse).